Reading from the N-terminus, the 316-residue chain is tRNA dimethylallyltransferase (316 aa).

Residue 17–24 (GPTASGKT) coordinates ATP. 19-24 (TASGKT) provides a ligand contact to substrate. Interaction with substrate tRNA stretches follow at residues 42-45 (DSAL), 166-170 (QRLSR), 247-252 (RCVGYR), and 280-287 (KRQITWLR).

It belongs to the IPP transferase family. Monomer. Mg(2+) serves as cofactor.

The catalysed reaction is adenosine(37) in tRNA + dimethylallyl diphosphate = N(6)-dimethylallyladenosine(37) in tRNA + diphosphate. Functionally, catalyzes the transfer of a dimethylallyl group onto the adenine at position 37 in tRNAs that read codons beginning with uridine, leading to the formation of N6-(dimethylallyl)adenosine (i(6)A). The protein is tRNA dimethylallyltransferase of Escherichia coli O127:H6 (strain E2348/69 / EPEC).